Reading from the N-terminus, the 330-residue chain is Peroxidase N1 (330 aa).

The N-terminal stretch at 1–29 (MEYYHHSINKMAMFMVILVLAIDVTMVLG) is a signal peptide. Glutamine 30 is subject to Pyrrolidone carboxylic acid. 4 cysteine pairs are disulfide-bonded: cysteine 41–cysteine 117, cysteine 74–cysteine 79, cysteine 123–cysteine 326, and cysteine 201–cysteine 233. Residue histidine 72 is the Proton acceptor of the active site. Residues aspartate 73, valine 76, glycine 78, aspartate 80, and serine 82 each coordinate Ca(2+). Residue proline 164 coordinates substrate. Histidine 194 is a heme b binding site. Threonine 195 is a Ca(2+) binding site. Asparagine 212 carries N-linked (GlcNAc...) asparagine glycosylation. The Ca(2+) site is built by aspartate 246 and aspartate 254.

This sequence belongs to the peroxidase family. Classical plant (class III) peroxidase subfamily. Ca(2+) serves as cofactor. It depends on heme b as a cofactor. Expressed at a high level in roots and at a trace level in lower leaves. Not expressed in upper leaves, stems, flowers, seeds and shoot apices.

It is found in the secreted. The catalysed reaction is 2 a phenolic donor + H2O2 = 2 a phenolic radical donor + 2 H2O. Its function is as follows. Removal of H(2)O(2), oxidation of toxic reductants, biosynthesis and degradation of lignin, suberization, auxin catabolism, response to environmental stresses such as wounding, pathogen attack and oxidative stress. These functions might be dependent on each isozyme/isoform in each plant tissue. Can use NADH, NADPH and monolignols as substrates. The protein is Peroxidase N1 of Nicotiana tabacum (Common tobacco).